The sequence spans 224 residues: uncharacterized protein (224 aa).

This is an uncharacterized protein from Mycobacterium tuberculosis (strain CDC 1551 / Oshkosh).